Reading from the N-terminus, the 64-residue chain is Large ribosomal subunit protein bL35 (64 aa).

The protein belongs to the bacterial ribosomal protein bL35 family.

The polypeptide is Large ribosomal subunit protein bL35 (Lactiplantibacillus plantarum (strain ATCC BAA-793 / NCIMB 8826 / WCFS1) (Lactobacillus plantarum)).